A 349-amino-acid chain; its full sequence is Twinfilin-2 (349 aa).

Position 2 is an N-acetylalanine (Ala-2). 2 ADF-H domains span residues 4 to 139 (QTGI…KHLS) and 177 to 313 (GLAF…DEVH). The residue at position 14 (Lys-14) is an N6-acetyllysine. Tyr-309 carries the post-translational modification Phosphotyrosine. The disordered stretch occupies residues 322-349 (AFAKPKGPGGKRGHKRLIRGPGENGDDS). Basic residues predominate over residues 330–339 (GGKRGHKRLI). Ser-349 carries the post-translational modification Phosphoserine.

It belongs to the actin-binding proteins ADF family. Twinfilin subfamily. Interacts with G-actin; ADP-actin form and capping protein (CP). May also be able to interact with TWF1 and phosphoinositides, PI(4,5)P2. When bound to PI(4,5)P2, it is down-regulated. Interacts with MYO7A. Post-translationally, in vitro, phosphorylated by PRKCZ, CK2 and SRC. As to expression, ubiquitously expressed (at protein level).

It is found in the cytoplasm. The protein localises to the cytoskeleton. The protein resides in the perinuclear region. Its subcellular location is the cell projection. It localises to the stereocilium. Its function is as follows. Actin-binding protein involved in motile and morphological processes. Inhibits actin polymerization, likely by sequestering G-actin. By capping the barbed ends of filaments, it also regulates motility. Seems to play an important role in clathrin-mediated endocytosis and distribution of endocytic organelles. May play a role in regulating the mature length of the middle and short rows of stereocilia. This Homo sapiens (Human) protein is Twinfilin-2 (TWF2).